We begin with the raw amino-acid sequence, 1001 residues long: Sarcoplasmic/endoplasmic reticulum calcium ATPase 1 (1001 aa).

The Cytoplasmic portion of the chain corresponds to 1–48 (MEAAHSKSTEECLAYFGVSETTGLTPDQVKRHLEKYGHNELPAEEGKS). A helical transmembrane segment spans residues 49–69 (LWELVIEQFEDLLVRILLLAA). Residues 70–89 (CISFVLAWFEEGEETITAFV) lie on the Lumenal side of the membrane. The chain crosses the membrane as a helical span at residues 90-110 (EPFVILLILIANAIVGVWQER). The Cytoplasmic portion of the chain corresponds to 111–253 (NAENAIEALK…QDKTPLQQKL (143 aa)). A helical transmembrane segment spans residues 254 to 273 (DEFGEQLSKVISLICVAVWL). Topologically, residues 274–295 (INIGHFNDPVHGGSWIRGAIYY) are lumenal. A helical membrane pass occupies residues 296–313 (FKIAVALAVAAIPEGLPA). Residues V304, A305, I307, and E309 each contribute to the Ca(2+) site. The Cytoplasmic segment spans residues 314 to 757 (VITTCLALGT…EEGRAIYNNM (444 aa)). D351 functions as the 4-aspartylphosphate intermediate in the catalytic mechanism. Mg(2+) contacts are provided by D351 and T353. ATP is bound at residue T353. T441 carries the phosphothreonine modification. Residues E442, R489, K515, and R560 each coordinate ATP. At T569 the chain carries Phosphothreonine. S581 is modified (phosphoserine). Residues T625, G626, D627, R678, and K684 each coordinate ATP. D703 is a binding site for Mg(2+). An ATP-binding site is contributed by N706. Residues 758–777 (KQFIRYLISSNVGEVVCIFL) form a helical membrane-spanning segment. N768 and E771 together coordinate Ca(2+). Topologically, residues 778 to 787 (TAALGLPEAL) are lumenal. Residues 788-808 (IPVQLLWVNLVTDGLPATALG) traverse the membrane as a helical segment. Residues 788-808 (IPVQLLWVNLVTDGLPATALG) form an interaction with PLN region. Ca(2+) is bound by residues N796, T799, and D800. Topologically, residues 809–828 (FNPPDLDIMDRPPRSPKEPL) are cytoplasmic. Residues 829 to 851 (ISGWLFFRYMAIGGYVGAATVGA) form a helical membrane-spanning segment. Residues 852-897 (AAWWFMYAEDGPGVTYHQLTHFMQCTEDHPHFEGLDCEIFEAPEPM) lie on the Lumenal side of the membrane. A disulfide bridge links C876 with C888. The chain crosses the membrane as a helical span at residues 898-917 (TMALSVLVTIEMCNALNSLS). A Ca(2+)-binding site is contributed by E908. Topologically, residues 918–930 (ENQSLMRMPPWVN) are cytoplasmic. A helical membrane pass occupies residues 931–949 (IWLLGSICLSMSLHFLILY). The interval 932–943 (WLLGSICLSMSL) is interaction with PLN. Topologically, residues 950-964 (VDPLPMIFKLKALDL) are lumenal. Residues 965-985 (TQWLMVLKISLPVIGLDEILK) traverse the membrane as a helical segment. The Cytoplasmic portion of the chain corresponds to 986 to 1001 (FIARNYLEDPEDERRK).

The protein belongs to the cation transport ATPase (P-type) (TC 3.A.3) family. Type IIA subfamily. In terms of assembly, interacts with sarcolipin (SLN). Interacts with phospholamban (PLN). Interacts with myoregulin (MRLN). Interacts with DWORF. Interacts with VMP1. Requires Mg(2+) as cofactor. As to expression, skeletal muscle (at protein level). Skeletal muscle, fast twitch muscle (type II) fibers.

It is found in the endoplasmic reticulum membrane. The protein resides in the sarcoplasmic reticulum membrane. The catalysed reaction is Ca(2+)(in) + ATP + H2O = Ca(2+)(out) + ADP + phosphate + H(+). Inhibited by sarcolipin (SLN) and myoregulin (MRLN). Has also been shown to be reversibly inhibited by phospholamban (PLN) at low calcium concentrations in vitro. Dephosphorylated PLN decreases the apparent affinity of the ATPase for calcium and this inhibition is regulated by the phosphorylation of PLN in vitro. Enhanced by DWORF; DWORF increases activity by displacing sarcolipin (SLN), phospholamban (PLN) and myoregulin (MRLN). Key regulator of striated muscle performance by acting as the major Ca(2+) ATPase responsible for the reuptake of cytosolic Ca(2+) into the sarcoplasmic reticulum. Catalyzes the hydrolysis of ATP coupled with the translocation of calcium from the cytosol to the sarcoplasmic reticulum lumen. Contributes to calcium sequestration involved in muscular excitation/contraction. This is Sarcoplasmic/endoplasmic reticulum calcium ATPase 1 (ATP2A1) from Oryctolagus cuniculus (Rabbit).